Consider the following 94-residue polypeptide: Pyrimidine/purine nucleoside phosphorylase (94 aa).

The protein belongs to the nucleoside phosphorylase PpnP family.

It catalyses the reaction a purine D-ribonucleoside + phosphate = a purine nucleobase + alpha-D-ribose 1-phosphate. It carries out the reaction adenosine + phosphate = alpha-D-ribose 1-phosphate + adenine. The enzyme catalyses cytidine + phosphate = cytosine + alpha-D-ribose 1-phosphate. The catalysed reaction is guanosine + phosphate = alpha-D-ribose 1-phosphate + guanine. It catalyses the reaction inosine + phosphate = alpha-D-ribose 1-phosphate + hypoxanthine. It carries out the reaction thymidine + phosphate = 2-deoxy-alpha-D-ribose 1-phosphate + thymine. The enzyme catalyses uridine + phosphate = alpha-D-ribose 1-phosphate + uracil. The catalysed reaction is xanthosine + phosphate = alpha-D-ribose 1-phosphate + xanthine. Its function is as follows. Catalyzes the phosphorolysis of diverse nucleosides, yielding D-ribose 1-phosphate and the respective free bases. Can use uridine, adenosine, guanosine, cytidine, thymidine, inosine and xanthosine as substrates. Also catalyzes the reverse reactions. This chain is Pyrimidine/purine nucleoside phosphorylase, found in Aeromonas salmonicida (strain A449).